We begin with the raw amino-acid sequence, 158 residues long: Transcriptional repressor NrdR (158 aa).

The segment at 1 to 22 is disordered; sequence MRCPYCGSEDTQVKDSRPAEDN. A zinc finger spans residues 3-34; sequence CPYCGSEDTQVKDSRPAEDNTSIRRRRICPDC. Positions 11-22 are enriched in basic and acidic residues; that stretch reads TQVKDSRPAEDN. The ATP-cone domain occupies 49–139; that stretch reads LMVIKKTGRK…VYRDFSHAED (91 aa).

This sequence belongs to the NrdR family. The cofactor is Zn(2+).

Negatively regulates transcription of bacterial ribonucleotide reductase nrd genes and operons by binding to NrdR-boxes. This chain is Transcriptional repressor NrdR, found in Rhizobium rhizogenes (strain K84 / ATCC BAA-868) (Agrobacterium radiobacter).